A 684-amino-acid chain; its full sequence is MLSPIVPYSLLKMHWNPEHAQPLSQWPEQHLDVSSTTSSPAHKSELYSSRGRGSYSYAWANDDISALTASNLLKRYAEKYSGMLDSPYERPSVGAYPEPGAFGGLNGGQKSELEPWPLTHSTDGAYSLVPPSSHESLSGPKVVPTSAGPPGSGNVSAVNSNLSDSGYSGSSSCSGPHSSEYPPSYNGTYLSSGYCPQPSSALPPASLHALQPNPTLLPSYTTTAPVYNYPPSTYPHQTGLAPSYTHPTAPYIPSPLPSRPTVVGGSYGYQNSSVGGSEPGGSLKRKAFEMTLDEEDSDSSRYRKYSYDPMKTGGDSPYGVTDKAGNGFGTGSTDPQGFKPSKPSSQSSLEGDEVGKYSGLKPLVSPTYGAAGDYSPPAAMTGENGGAEQGFSQNRSQKRSDPMKSIEPRMLELVSRELQDCSPAMLWTELAGNCHIKAALEEDLLWPVLRPNPAIHPPKTILLFGPQGGGKTTLARSLSSQIGASFYRLSCATLASKLKGEAEQLLLTLFSVATARQPAMVLLSEVEAIEEEGLRQQLQAQLEKIQHNQSNQFLVVCTTRRPDLIKDSLLRCFSKRYHIGLPDGNTRRHVLLQALAPQGCSLSERELSAVLQRSEGFSVWELLQLCQQALASASASASVPLHSLPASLSSPTLQDFENAFCKVRPHSTPKELDTCMEWSKVYSH.

Positions 27–41 (PEQHLDVSSTTSSPA) are enriched in polar residues. Disordered stretches follow at residues 27 to 48 (PEQHLDVSSTTSSPAHKSELYS), 99 to 179 (PGAF…PHSS), and 292 to 403 (LDEE…SDPM). Over residues 160–179 (SNLSDSGYSGSSSCSGPHSS) the composition is skewed to low complexity. Position 431 (alanine 431) interacts with ATP.

It belongs to the AAA ATPase family. It depends on Mg(2+) as a cofactor. Highly expressed in vascular endothelial cells and neuronal cells.

It is found in the cytoplasm. It localises to the cell cortex. It carries out the reaction ATP + H2O = ADP + phosphate + H(+). Functionally, microtubule-severing enzyme that negatively regulates cell migration and wound healing. In migrating cells, targets dynamic microtubules (MTs) at the leading edge and severs them, thereby suppressing motility. Negative regulator of axon regeneration that suppresses axonal growth by selectively severing dynamic MTs in the distal axon shaft and growth cone. Contributes to proper cell branching during endothelial and neuronal development. In Danio rerio (Zebrafish), this protein is Fidgetin-like protein 2 (fignl2).